The primary structure comprises 221 residues: MALPNQGTVDYPSFKLVIVGDGGTGKTTFVKRHLTGEFEKKYEPTIGVEVHPLDFTTNCGKIRFYCWDTAGQEKFGGLRDGYYIHGQCAIIMFDVTSRLTYKNVPTWHRDLCRVCENIPIVLCGNKVDVKNRQVKAKQVTFHRKKNLQYYEISAKSNYNFEKPFLYLARKLAGDPNLHFVEAVALKPPEVPIDLAMQQQHEAELAAAAAQPLPDDDDDLIE.

Positions 10–174 (DYPSFKLVIV…LYLARKLAGD (165 aa)) constitute a Small GTPase Ran-type domain. Position 21-28 (21-28 (DGGTGKTT)) interacts with GTP. The tract at residues 40-48 (KKYEPTIGV) is switch-I. Residues Gly71, 125–128 (NKVD), and 153–155 (SAK) contribute to the GTP site. The switch-II stretch occupies residues 71-87 (GQEKFGGLRDGYYIHGQ).

Belongs to the small GTPase superfamily. Ran family. Found in a nuclear export complex with RanGTP, exportin and pre-miRNA.

It is found in the nucleus. Its function is as follows. GTP-binding protein involved in nucleocytoplasmic transport. Required for the import of protein into the nucleus and also for RNA export. Involved in chromatin condensation and control of cell cycle. This chain is GTP-binding nuclear protein Ran-2 (RAN2), found in Oryza sativa subsp. indica (Rice).